Reading from the N-terminus, the 99-residue chain is Protein AC4 (99 aa).

It belongs to the geminiviridae protein AC4/C4 family.

Its function is as follows. Pathogenicity determinant. May act as a suppressor of RNA-mediated gene silencing, also known as post-transcriptional gene silencing (PTGS), a mechanism of plant viral defense that limits the accumulation of viral RNAs. The protein is Protein AC4 of Glycine max (Soybean).